Reading from the N-terminus, the 409-residue chain is uncharacterized protein (409 aa).

The next 10 helical transmembrane spans lie at 53 to 73 (IITLVGLLCNIGMYLIMYVHC), 83 to 103 (WCYFAVAFLIFAYQTLDNVDG), 115 to 135 (LGELFDHVCDALSVAMFAIVM), 141 to 161 (IGPYWTFFSFIVGMWPFYLAH), 183 to 203 (VLFMIIEIITGIFGSDIWTYG), 205 to 225 (STTVGKIATVFVSIGAVVTCL), 243 to 263 (CLLQLTPICLFTALIVIWASV), 265 to 285 (NLITEQPHLFIMTLGILFGYI), 299 to 319 (CSLFYPIFVPIIIVVLNSILA), and 329 to 349 (TVALWILFSIACAQFLLFSYF). The segment covering 388–401 (EEGSSSIGNSTDDI) has biased composition (polar residues). The tract at residues 388 to 409 (EEGSSSIGNSTDDINPSEIEEI) is disordered.

It belongs to the CDP-alcohol phosphatidyltransferase class-I family.

The protein resides in the membrane. This is an uncharacterized protein from Dictyostelium discoideum (Social amoeba).